A 196-amino-acid chain; its full sequence is DnaA initiator-associating protein DiaA (196 aa).

The SIS domain maps to 34-196 (LVQSLLNGNK…DSTLFPHQDE (163 aa)).

The protein belongs to the SIS family. DiaA subfamily. As to quaternary structure, homotetramer; dimer of dimers.

Its function is as follows. Required for the timely initiation of chromosomal replication via direct interactions with the DnaA initiator protein. This chain is DnaA initiator-associating protein DiaA, found in Serratia proteamaculans (strain 568).